A 612-amino-acid chain; its full sequence is MDYAEMLDRQKHIRNFSIIAHIDHGKSTLADRILEMTDTIAKRDMQAQVLDDMELERERGITIKLNAVELHYHAKDGETYIFHLIDTPGHVDFSYEVSRSLAACEGALLVVDAAQGVEAQTLANVYLAVDDDLEIVPVINKIDLPSAQPDVVKAEIEEMIGLDASEAVLASAKSGIGIEEILEKLVTDVPAPTGDLEAPLKALIFDSNYDSYRGVVLNIRVVDGTVKVGDKIRLMNSGKEFEVTEVGVMSPKAVKRDFLMVGDVGYITASIKTIQDTRVGDTVTLADNPADAPLDGYRHIQPMVYSGMYPVDNAKFNDLREALEKLQLNDAALEFEPESSQALGFGFRCGFLGLLHMDVVQERLEREFNLDLIMTAPSVDYHVALTDGTEEVIDNPSEMPETSNISEVKEPYVKASIMVPNDYVGAVMELAQRKRGEFVTMDYLDTYRVNVIYNMPLSEIIFDFFDDLKSNTKGYASFDYEVTGYRASDLVKIDILLNGEAVDALSFIVHRDFAFERSRVIVGKLKETIPRQQFEVPIQAAIGNKIIARSTVKAFRKNVLAKCYGGDITRKRKLLEKQKAGKKRMKSVGSVEVPQEAFMSILKMNDEDTKGK.

Residues 11–193 (KHIRNFSIIA…KLVTDVPAPT (183 aa)) form the tr-type G domain. Residues 23–28 (DHGKST) and 140–143 (NKID) contribute to the GTP site.

It belongs to the TRAFAC class translation factor GTPase superfamily. Classic translation factor GTPase family. LepA subfamily.

The protein resides in the cell membrane. The enzyme catalyses GTP + H2O = GDP + phosphate + H(+). Its function is as follows. Required for accurate and efficient protein synthesis under certain stress conditions. May act as a fidelity factor of the translation reaction, by catalyzing a one-codon backward translocation of tRNAs on improperly translocated ribosomes. Back-translocation proceeds from a post-translocation (POST) complex to a pre-translocation (PRE) complex, thus giving elongation factor G a second chance to translocate the tRNAs correctly. Binds to ribosomes in a GTP-dependent manner. This chain is Elongation factor 4, found in Latilactobacillus sakei subsp. sakei (strain 23K) (Lactobacillus sakei subsp. sakei).